We begin with the raw amino-acid sequence, 268 residues long: AN1-type zinc finger protein 1 (268 aa).

N-acetylalanine is present on Ala2. 2 consecutive AN1-type zinc fingers follow at residues 4-52 (LDIG…VINE) and 58-106 (QHTS…IPKP). Positions 10, 15, 25, 28, 33, 36, 42, 44, 64, 69, 79, 82, 87, 90, 96, and 98 each coordinate Zn(2+). Residues 160 to 260 (QTERIYFQVF…EYLNDEEQFC (101 aa)) form a ubiquitin-like region.

Associates with the 26S proteasome; this association occurs upon exposure to arsenite and is reduced in the presence of ATP. Interacts (via AN1-type 1 and 2 zinc fingers) with PSMD1; this interaction is increased upon arsenite treatment and occurs in an ATP-independent manner. Interacts with PSMC4. Interacts with PSMA1. Interacts (via its ubiquitin-like region) with VCP; this interaction occurs in an arsenite-dependent manner and is necessary for the recruitment of the ubiquitin-selective ATPase VCP to stress granules (SGs).

The protein resides in the cytoplasm. It is found in the stress granule. In terms of biological role, plays a role in the regulation of cytoplasmic stress granules (SGs) turnover. SGs are dynamic and transient cytoplasmic ribonucleoprotein assemblies important for cellular protein homeostasis when protein production is suspended after acute exogenous stress. Associates with SGs and is involved in the efficient and specific arsenite-induced clearance process of SGs through the recruitment of the ubiquitin-selective ATPase VCP and the 26S proteasome. This process requires both complexes for efficient degradation of damaged ubiquitinated SG proteins during recovery from arsenite stress, and hence avoiding aberrant cytoplasmic SGs degradation via autophagy. This Homo sapiens (Human) protein is AN1-type zinc finger protein 1.